Consider the following 85-residue polypeptide: Large ribosomal subunit protein bL27 (85 aa).

Residues 1–20 (MAHKKAGGSTRNGRDSEAKR) are disordered.

The protein belongs to the bacterial ribosomal protein bL27 family.

In Proteus mirabilis (strain HI4320), this protein is Large ribosomal subunit protein bL27.